A 423-amino-acid polypeptide reads, in one-letter code: Dihydrolipoyllysine-residue succinyltransferase component of 2-oxoglutarate dehydrogenase complex (423 aa).

Residues 1-76 form the Lipoyl-binding domain; it reads MPEVKVPELA…EVGQAIAVIG (76 aa). The residue at position 42 (K42) is an N6-lipoyllysine. The segment at 76-185 is disordered; it reads GEGSGNASKE…APAKEEKKYN (110 aa). Residues 80 to 96 show a composition bias toward polar residues; the sequence is GNASKENSNDNTPQQND. Residues 99–115 show a composition bias toward basic and acidic residues; the sequence is TNNKKEETTNKSADKAE. The span at 116–131 shows a compositional bias: polar residues; it reads VNQTNDDNQQRVNATP. A Peripheral subunit-binding (PSBD) domain is found at 128 to 164; sequence NATPSARRYARENGVNLAEVSPKTNDVVRKEDIDKKQ. Over residues 153–164 the composition is skewed to basic and acidic residues; it reads DVVRKEDIDKKQ. A compositionally biased stretch (low complexity) spans 165 to 177; sequence QAPASTQTTQQAP. Catalysis depends on residues H394 and D398.

It belongs to the 2-oxoacid dehydrogenase family. In terms of assembly, forms a 24-polypeptide structural core with octahedral symmetry. Part of the 2-oxoglutarate dehydrogenase (OGDH) complex composed of E1 (2-oxoglutarate dehydrogenase), E2 (dihydrolipoamide succinyltransferase) and E3 (dihydrolipoamide dehydrogenase); the complex contains multiple copies of the three enzymatic components (E1, E2 and E3). Requires (R)-lipoate as cofactor.

The enzyme catalyses N(6)-[(R)-dihydrolipoyl]-L-lysyl-[protein] + succinyl-CoA = N(6)-[(R)-S(8)-succinyldihydrolipoyl]-L-lysyl-[protein] + CoA. It functions in the pathway amino-acid degradation; L-lysine degradation via saccharopine pathway; glutaryl-CoA from L-lysine: step 6/6. E2 component of the 2-oxoglutarate dehydrogenase (OGDH) complex which catalyzes the second step in the conversion of 2-oxoglutarate to succinyl-CoA and CO(2). The polypeptide is Dihydrolipoyllysine-residue succinyltransferase component of 2-oxoglutarate dehydrogenase complex (odhB) (Staphylococcus aureus (strain MRSA252)).